The chain runs to 2344 residues: Peroxide stress-activated histidine kinase mak3 (2344 aa).

Residues 1 to 295 (MYSQHELRNK…GIVNDLEACL (295 aa)) enclose the Protein kinase domain. A phosphoserine mark is found at S12, S16, and S17. The span at 486 to 503 (SGNTRKTSLLGSNHSSYS) shows a compositional bias: polar residues. The interval 486–506 (SGNTRKTSLLGSNHSSYSDKL) is disordered. TPR repeat units follow at residues 829–862 (CHYLHLAAEEALKIGANQEALDLYNRCIKMIPHE) and 1340–1373 (AFAFETVGSIFVSMELYTSATQYLEEAIRNYAAL). One can recognise a PAC domain in the interval 1730–1781 (FELEIRIKRKDGVYRWNLTRCTPTTNEKNRTSFLCATIDIDDQKKARATALE). The region spanning 1792–2018 (NISHELRTPF…TFKICYDLKI (227 aa)) is the Histidine kinase domain. H1795 carries the phosphohistidine; by autocatalysis modification. The Response regulatory domain occupies 2211–2333 (KILIAEDNPI…TLIKMLLQYL (123 aa)). D2263 carries the post-translational modification 4-aspartylphosphate.

It is found in the cytoplasm. It carries out the reaction ATP + protein L-histidine = ADP + protein N-phospho-L-histidine.. Involved in the control of the SAPK-dependent transcriptional response to peroxide stress. Regulates sty1 activity. In Schizosaccharomyces pombe (strain 972 / ATCC 24843) (Fission yeast), this protein is Peroxide stress-activated histidine kinase mak3 (mak3).